The chain runs to 238 residues: Large ribosomal subunit protein uL1 (238 aa).

The protein belongs to the universal ribosomal protein uL1 family. As to quaternary structure, part of the 50S ribosomal subunit.

Functionally, binds directly to 23S rRNA. The L1 stalk is quite mobile in the ribosome, and is involved in E site tRNA release. Protein L1 is also a translational repressor protein, it controls the translation of the L11 operon by binding to its mRNA. The chain is Large ribosomal subunit protein uL1 from Nostoc sp. (strain PCC 7120 / SAG 25.82 / UTEX 2576).